The sequence spans 440 residues: Beta-1,3-galactosyl-O-glycosyl-glycoprotein beta-1,6-N-acetylglucosaminyltransferase (440 aa).

At 1 to 12 (MKMAGWKKKLCR) the chain is on the cytoplasmic side. Residues 13 to 30 (GHHLWALGCYMLLAVVSL) traverse the membrane as a helical; Signal-anchor for type II membrane protein segment. Over 31 to 440 (RLSLRFKCDV…RHKAIYGTEL (410 aa)) the chain is Lumenal. 2 N-linked (GlcNAc...) asparagine; by host glycosylation sites follow: N72 and N108. 4 disulfide bridges follow: C73-C230, C164-C384, C185-C212, and C393-C425.

The protein belongs to the glycosyltransferase 14 family.

The protein resides in the host Golgi apparatus membrane. The enzyme catalyses a 3-O-[beta-D-galactosyl-(1-&gt;3)-N-acetyl-alpha-D-galactosaminyl]-L-seryl-[protein] + UDP-N-acetyl-alpha-D-glucosamine = 3-O-{beta-D-galactosyl-(1-&gt;3)-[N-acetyl-beta-D-glucosaminyl-(1-&gt;6)]-N-acetyl-alpha-D-galactosaminyl}-L-seryl-[protein] + UDP + H(+). The catalysed reaction is a 3-O-[beta-D-galactosyl-(1-&gt;3)-N-acetyl-alpha-D-galactosaminyl]-L-threonyl-[protein] + UDP-N-acetyl-alpha-D-glucosamine = a 3-O-{beta-D-galactosyl-(1-&gt;3)-[N-acetyl-beta-D-glucosaminyl-(1-&gt;6)]-N-acetyl-alpha-D-galactosaminyl}-L-threonyl-[protein] + UDP + H(+). It carries out the reaction a beta-D-Gal-(1-&gt;4)-beta-D-GlcNAc-(1-&gt;3)-beta-D-Gal-(1-&gt;4)-beta-D-GlcNAc derivative + UDP-N-acetyl-alpha-D-glucosamine = a beta-D-Gal-(1-&gt;4)-beta-D-GlcNAc-(1-&gt;3)-[beta-D-GlcNAc-(1-&gt;6)]-beta-D-Gal-(1-&gt;4)-N-acetyl-beta-D-glucosaminyl derivative + UDP + H(+). It catalyses the reaction 3-O-[N-acetyl-beta-D-glucosaminyl-(1-&gt;3)-N-acetyl-alpha-D-galactosaminyl]-L-seryl-[protein] + UDP-N-acetyl-alpha-D-glucosamine = 3-O-[N-acetyl-beta-D-glucosaminyl-(1-&gt;3)-[N-acetyl-beta-D-glucosaminyl-(1-&gt;6)]-N-acetyl-alpha-D-galactosaminyl]-L-seryl-[protein] + UDP + H(+). The enzyme catalyses a 3-O-[N-acetyl-beta-D-glucosaminyl-(1-&gt;3)-N-acetyl-alpha-D-galactosaminyl]-L-threonyl-[protein] + UDP-N-acetyl-alpha-D-glucosamine = 3-O-[N-acetyl-beta-D-glucosaminyl-(1-&gt;3)-[N-acetyl-beta-D-glucosaminyl-(1-&gt;6)]-N-acetyl-alpha-D-galactosaminyl]-L-threonyl-[protein] + UDP + H(+). Its pathway is protein modification; protein glycosylation. Functionally, non-essential glycosyltransferase that can synthesize all known mucin beta 6 N-acetylglucosaminides. Mediates core 2 and core 4 O-glycan branching, 2 important steps in mucin-type biosynthesis. Has also I-branching enzyme activity by converting linear into branched poly-N-acetyllactosaminoglycans. Contributes to the post-translational modifications of structural proteins. This chain is Beta-1,3-galactosyl-O-glycosyl-glycoprotein beta-1,6-N-acetylglucosaminyltransferase (Bo17), found in Bos taurus (Bovine).